The sequence spans 207 residues: Holliday junction branch migration complex subunit RuvA (207 aa).

Residues 1–63 (MIDSLHGEVL…DDGIDLYAFE (63 aa)) form a domain I region. The domain II stretch occupies residues 64–142 (SDEARQMFAM…VFDSGDSASE (79 aa)). The segment at 143 to 154 (PQSGVGGNSEAE) is flexible linker. Residues 155–207 (VDSGVVGTVTQALVELGFPEKQAEKTATSAAAEGGSVSEILKRALRSMSSERN) form a domain III region.

This sequence belongs to the RuvA family. As to quaternary structure, homotetramer. Forms an RuvA(8)-RuvB(12)-Holliday junction (HJ) complex. HJ DNA is sandwiched between 2 RuvA tetramers; dsDNA enters through RuvA and exits via RuvB. An RuvB hexamer assembles on each DNA strand where it exits the tetramer. Each RuvB hexamer is contacted by two RuvA subunits (via domain III) on 2 adjacent RuvB subunits; this complex drives branch migration. In the full resolvosome a probable DNA-RuvA(4)-RuvB(12)-RuvC(2) complex forms which resolves the HJ.

It is found in the cytoplasm. Its function is as follows. The RuvA-RuvB-RuvC complex processes Holliday junction (HJ) DNA during genetic recombination and DNA repair, while the RuvA-RuvB complex plays an important role in the rescue of blocked DNA replication forks via replication fork reversal (RFR). RuvA specifically binds to HJ cruciform DNA, conferring on it an open structure. The RuvB hexamer acts as an ATP-dependent pump, pulling dsDNA into and through the RuvAB complex. HJ branch migration allows RuvC to scan DNA until it finds its consensus sequence, where it cleaves and resolves the cruciform DNA. The polypeptide is Holliday junction branch migration complex subunit RuvA (Corynebacterium kroppenstedtii (strain DSM 44385 / JCM 11950 / CIP 105744 / CCUG 35717)).